The sequence spans 1786 residues: Laminin subunit beta-1 (1786 aa).

The signal sequence occupies residues 1 to 21; sequence MGLLQVFAFGVLALWGTRVCA. Residues 31 to 270 enclose the Laminin N-terminal domain; sequence AEGSCYPATG…AVYDMVVRGN (240 aa). N120 is a glycosylation site (N-linked (GlcNAc...) asparagine). S250 is modified (phosphoserine). Disulfide bonds link C271-C280, C273-C298, C300-C309, C312-C332, C335-C344, C337-C362, C365-C374, C377-C395, C398-C411, C400-C426, C428-C437, C440-C455, C458-C472, C460-C479, C481-C490, C493-C507, C510-C522, C512-C529, and C531-C540. Laminin EGF-like domains are found at residues 271 to 334, 335 to 397, 398 to 457, and 458 to 509; these read CFCY…ACKK, CNCN…LCEP, CTCD…GCKS, and CACN…GCRP. N-linked (GlcNAc...) asparagine glycosylation is present at N356. In terms of domain architecture, Laminin EGF-like 5; truncated spans 510–540; it reads CDCDLGGALNNSCSEDSGQCSCLPHMIGRQC. N-linked (GlcNAc...) asparagine glycosylation is present at N519. Positions 549 to 767 constitute a Laminin IV type B domain; it reads FTTLDHYIYE…IIFSISALIH (219 aa). N-linked (GlcNAc...) asparagine glycosylation is present at N677. 32 cysteine pairs are disulfide-bonded: C773–C785, C775–C792, C794–C803, C806–C818, C821–C833, C823–C840, C842–C851, C854–C864, C867–C876, C869–C883, C886–C895, C898–C914, C917–C933, C919–C944, C946–C955, C958–C973, C976–C990, C978–C997, C1000–C1009, C1012–C1025, C1028–C1040, C1030–C1054, C1056–C1065, C1068–C1081, C1084–C1096, C1086–C1103, C1105–C1114, C1117–C1129, C1132–C1144, C1134–C1151, C1153–C1162, and C1165–C1176. Laminin EGF-like domains lie at 773–820, 821–866, 867–916, 917–975, 976–1027, 1028–1083, 1084–1131, and 1132–1178; these read CECD…GCKP, CDCH…SCQP, CQCN…HCRP, CPCP…SCQP, CQCH…DCRK, CVCN…GCGP, CNCN…ECRA, and CDCD…DCTP. N-linked (GlcNAc...) asparagine glycosylation is present at N1041. A domain II region spans residues 1179 to 1397; the sequence is CHQCFALWDA…LDLSAVAQMT (219 aa). 4 N-linked (GlcNAc...) asparagine glycosylation sites follow: N1195, N1279, N1336, and N1343. A coiled-coil region spans residues 1216-1315; the sequence is YRETVDSVEK…LEFIKNSDIQ (100 aa). Positions 1368–1388 form a coiled coil; it reads KEQQEEQARLLDELAGKLQSL. Positions 1398–1430 are domain alpha; it reads CGTPPGADCSESECGGPNCRTDEGEKKCGGPGC. The interval 1431–1786 is domain I; sequence GGLVTVAHSA…EKVAVYSTCL (356 aa). The stretch at 1448-1778 forms a coiled coil; sequence DRDVLSALAE…RSLLKDISEK (331 aa). A glycan (N-linked (GlcNAc...) asparagine) is linked at N1487. S1496 bears the Phosphoserine mark. N-linked (GlcNAc...) asparagine glycans are attached at residues N1542 and N1643. Phosphoserine is present on S1666.

Laminin is a complex glycoprotein, consisting of three different polypeptide chains (alpha, beta, gamma), which are bound to each other by disulfide bonds into a cross-shaped molecule comprising one long and three short arms with globules at each end. Beta-1 is a subunit of laminin-1 (laminin-111 or EHS laminin), laminin-2 (laminin-211 or merosin), laminin-6 (laminin-311 or K-laminin), laminin-8 (laminin-411), laminin-10 (laminin-511) and laminin-12 (laminin-213). Interacts with ITGB1. In terms of tissue distribution, widely expressed in the embryo. High levels are detected in the cerebellar basement membrane, at postnatal day 7.

It is found in the secreted. The protein localises to the extracellular space. It localises to the extracellular matrix. The protein resides in the basement membrane. Functionally, binding to cells via a high affinity receptor, laminin is thought to mediate the attachment, migration and organization of cells into tissues during embryonic development by interacting with other extracellular matrix components. Involved in the organization of the laminar architecture of the cerebral cortex. It is probably required for the integrity of the basement membrane/glia limitans that serves as an anchor point for the endfeet of radial glial cells and as a physical barrier to migrating neurons. Radial glial cells play a central role in cerebral cortical development, where they act both as the proliferative unit of the cerebral cortex and a scaffold for neurons migrating toward the pial surface. The sequence is that of Laminin subunit beta-1 (Lamb1) from Mus musculus (Mouse).